Reading from the N-terminus, the 190-residue chain is Putative manganese efflux pump MntP (190 aa).

6 consecutive transmembrane segments (helical) span residues 3-23, 37-57, 72-88, 111-131, 138-158, and 164-184; these read FLQI…CSVV, LVLA…GWVI, HWIA…KMIW, IILG…LAFV, VALS…WIGH, and FGKW…ANIV.

The protein belongs to the MntP (TC 9.B.29) family.

It localises to the cell membrane. In terms of biological role, probably functions as a manganese efflux pump. This Corynebacterium glutamicum (strain R) protein is Putative manganese efflux pump MntP.